The chain runs to 394 residues: GPI mannosyltransferase 2 (394 aa).

The next 9 membrane-spanning stretches (helical) occupy residues 2–22, 47–67, 104–124, 132–152, 185–205, 232–252, 293–313, 323–343, and 371–391; these read LWKL…IIYF, YYNV…SVYF, LTSI…LYYL, FGLV…LTGN, SITN…NFTV, IILS…TNIY, IPNF…LGYM, LLPL…FWNI, and YAIG…AAFL.

Belongs to the PIGV family.

The protein localises to the endoplasmic reticulum membrane. Its pathway is glycolipid biosynthesis; glycosylphosphatidylinositol-anchor biosynthesis. Mannosyltransferase involved in glycosylphosphatidylinositol-anchor biosynthesis. Transfers the second mannose to the glycosylphosphatidylinositol during GPI precursor assembly. This Candida albicans (strain SC5314 / ATCC MYA-2876) (Yeast) protein is GPI mannosyltransferase 2 (GPI18).